A 449-amino-acid polypeptide reads, in one-letter code: Glucose-6-phosphate isomerase (449 aa).

The active-site Proton donor is the Glu291. Active-site residues include His312 and Lys426.

This sequence belongs to the GPI family.

The protein localises to the cytoplasm. It carries out the reaction alpha-D-glucose 6-phosphate = beta-D-fructose 6-phosphate. The protein operates within carbohydrate biosynthesis; gluconeogenesis. Its pathway is carbohydrate degradation; glycolysis; D-glyceraldehyde 3-phosphate and glycerone phosphate from D-glucose: step 2/4. Catalyzes the reversible isomerization of glucose-6-phosphate to fructose-6-phosphate. This Streptococcus pyogenes serotype M4 (strain MGAS10750) protein is Glucose-6-phosphate isomerase.